The sequence spans 111 residues: WAP four-disulfide core domain protein 12 (111 aa).

The N-terminal stretch at 1-23 (MGSSSFLVLMVSLALVTLVAAEG) is a signal peptide. The 48-residue stretch at 27-74 (GIEKAGVCPADNIRCFKSDPPQCHTDQDCLGERKCCYLHCGFKCVIPV) folds into the WAP domain. Disulfide bonds link cysteine 34–cysteine 62, cysteine 41–cysteine 66, cysteine 49–cysteine 61, and cysteine 55–cysteine 70. Residues 80 to 111 (GGNKDEDVSGPCPEPGWEAKSPGSSSTGCPQK) form a disordered region. Polar residues predominate over residues 101-111 (PGSSSTGCPQK).

Its subcellular location is the secreted. Antibacterial protein. Putative acid-stable proteinase inhibitor. The chain is WAP four-disulfide core domain protein 12 (WFDC12) from Macaca mulatta (Rhesus macaque).